The sequence spans 211 residues: Large ribosomal subunit protein eL13 (211 aa).

N6-acetyllysine is present on Lys16. Ser52 and Ser77 each carry phosphoserine. Residues Lys123 and Lys145 each participate in a glycyl lysine isopeptide (Lys-Gly) (interchain with G-Cter in SUMO2) cross-link. Lys174 is covalently cross-linked (Glycyl lysine isopeptide (Lys-Gly) (interchain with G-Cter in SUMO1); alternate). Residues Lys174 and Lys177 each participate in a glycyl lysine isopeptide (Lys-Gly) (interchain with G-Cter in SUMO2); alternate cross-link. Lys177 bears the N6-acetyllysine; alternate mark.

This sequence belongs to the eukaryotic ribosomal protein eL13 family. As to quaternary structure, component of the 60S large ribosomal subunit (LSU).

The protein localises to the cytoplasm. Component of the ribosome, a large ribonucleoprotein complex responsible for the synthesis of proteins in the cell. The small ribosomal subunit (SSU) binds messenger RNAs (mRNAs) and translates the encoded message by selecting cognate aminoacyl-transfer RNA (tRNA) molecules. The large subunit (LSU) contains the ribosomal catalytic site termed the peptidyl transferase center (PTC), which catalyzes the formation of peptide bonds, thereby polymerizing the amino acids delivered by tRNAs into a polypeptide chain. The nascent polypeptides leave the ribosome through a tunnel in the LSU and interact with protein factors that function in enzymatic processing, targeting, and the membrane insertion of nascent chains at the exit of the ribosomal tunnel. As part of the LSU, it is probably required for its formation and the maturation of rRNAs. Plays a role in bone development. This is Large ribosomal subunit protein eL13 (RPL13) from Bos taurus (Bovine).